The following is a 150-amino-acid chain: MAARILLINGPNLNLLGTREPSVYGSTTLADVVAQAKTQAASLNVHLEAFQSNHEGAIVDRIHEARGAVDAIVINPGAYTHTSVAIRDALLGVDIPFVETHISNVHAREEWRRHSYFSDKAVAVICGLGTYGYTAAIEFAARHMKMKDRV.

Y24 serves as the catalytic Proton acceptor. Substrate-binding residues include N75, H81, and D88. Residue H101 is the Proton donor of the active site. Substrate-binding positions include 102–103 (IS) and R112.

This sequence belongs to the type-II 3-dehydroquinase family. In terms of assembly, homododecamer. Adopts a ring-like structure, composed of an arrangement of two hexameric rings stacked on top of one another.

The catalysed reaction is 3-dehydroquinate = 3-dehydroshikimate + H2O. The protein operates within aromatic compound metabolism; 3,4-dihydroxybenzoate biosynthesis; 3,4-dihydroxybenzoate from 3-dehydroquinate: step 1/2. Functionally, is involved in the catabolism of quinate. Allows the utilization of quinate as carbon source via the beta-ketoadipate pathway. The chain is Catabolic 3-dehydroquinase from Verticillium alfalfae (strain VaMs.102 / ATCC MYA-4576 / FGSC 10136) (Verticillium wilt of alfalfa).